The following is a 138-amino-acid chain: MRLTQGTFSFLPDLTDEQIKKQIAYAVSQNWAINIEFTDDPHPRNNYWELWGLPLFDINDVESVMYELESCRKQHSGLYIKINAFDNTRGVESCVLSFIINRPSYEPGFELIRSEDIGRNQKYSFRSYATAKPEGSRY.

Belongs to the RuBisCO small chain family. In terms of assembly, heterohexadecamer of 8 large and 8 small subunits.

It is found in the plastid. The protein localises to the chloroplast. In terms of biological role, ruBisCO catalyzes two reactions: the carboxylation of D-ribulose 1,5-bisphosphate, the primary event in carbon dioxide fixation, as well as the oxidative fragmentation of the pentose substrate in the photorespiration process. Both reactions occur simultaneously and in competition at the same active site. Although the small subunit is not catalytic it is essential for maximal activity. The sequence is that of Ribulose bisphosphate carboxylase small subunit from Antithamnion sp. (Red alga).